Consider the following 238-residue polypeptide: Ribonuclease PH (238 aa).

Phosphate is bound by residues Arg-86 and 124-126; that span reads GTR.

It belongs to the RNase PH family. In terms of assembly, homohexameric ring arranged as a trimer of dimers.

The catalysed reaction is tRNA(n+1) + phosphate = tRNA(n) + a ribonucleoside 5'-diphosphate. Phosphorolytic 3'-5' exoribonuclease that plays an important role in tRNA 3'-end maturation. Removes nucleotide residues following the 3'-CCA terminus of tRNAs; can also add nucleotides to the ends of RNA molecules by using nucleoside diphosphates as substrates, but this may not be physiologically important. Probably plays a role in initiation of 16S rRNA degradation (leading to ribosome degradation) during starvation. This is Ribonuclease PH from Edwardsiella ictaluri (strain 93-146).